We begin with the raw amino-acid sequence, 430 residues long: Immunoglobulin heavy constant delta (430 aa).

Residues 1–406 (APTKAPDVFP…FDDVGSLWTT (406 aa)) lie on the Extracellular side of the membrane. In terms of domain architecture, Ig-like 1 spans 6–98 (PDVFPIISGC…TASKSKKEIF (93 aa)). Cys28 and Cys84 are disulfide-bonded. The tract at residues 96–167 (EIFRWPESPK…TPECPSHTQP (72 aa)) is disordered. Positions 106–118 (AQASSVPTAQPQA) are enriched in polar residues. Residues Ser109 and Ser110 are each glycosylated (O-linked (GalNAc...) serine). 5 O-linked (GalNAc...) threonine glycosylation sites follow: Thr113, Thr126, Thr127, Thr131, and Thr132. Residues 138-158 (GGEEKKKEKEKEEQEERETKT) are compositionally biased toward basic and acidic residues. Ig-like domains lie at 175–263 (PAVQ…RLMA) and 267–373 (PAAQ…RSLE). 2 cysteine pairs are disulfide-bonded: Cys190–Cys249 and Cys294–Cys355. Asn225, Asn316, and Asn367 each carry an N-linked (GlcNAc...) asparagine glycan. Residues 407-427 (LSTFVALFILTLLYSGIVTFI) traverse the membrane as a helical segment. Residues 428 to 430 (KVK) are Cytoplasmic-facing.

In terms of assembly, immunoglobulins are composed of two identical heavy chains and two identical light chains; disulfide-linked. An IgD molecule contains thus a delta heavy chain combined with either a kappa or a lambda light chains. Kappa light chains are found predominantly on the membrane IgD (mIgD) form and lambda on the secreted IgD (sIgD) form, this fact is poorly understood. Membrane-bound IgD molecules are non-covalently associated with a heterodimer of CD79A and CD79B.

The protein localises to the secreted. Its subcellular location is the cell membrane. Constant region of immunoglobulin heavy chains. Immunoglobulins, also known as antibodies, are membrane-bound or secreted glycoproteins produced by B lymphocytes. In the recognition phase of humoral immunity, the membrane-bound immunoglobulins serve as receptors which, upon binding of a specific antigen, trigger the clonal expansion and differentiation of B lymphocytes into immunoglobulins-secreting plasma cells. Secreted immunoglobulins mediate the effector phase of humoral immunity, which results in the elimination of bound antigens. The antigen binding site is formed by the variable domain of one heavy chain, together with that of its associated light chain. Thus, each immunoglobulin has two antigen binding sites with remarkable affinity for a particular antigen. The variable domains are assembled by a process called V-(D)-J rearrangement and can then be subjected to somatic hypermutations which, after exposure to antigen and selection, allow affinity maturation for a particular antigen. IgD is the major antigen receptor isotype on the surface of most peripheral B-cells, where it is coexpressed with IgM. The membrane-bound IgD (mIgD) induces the phosphorylation of CD79A and CD79B by the Src family of protein tyrosine kinases. Soluble IgD (sIgD) concentration in serum below those of IgG, IgA, and IgM but much higher than that of IgE. IgM and IgD molecules present on B cells have identical V regions and antigen-binding sites. After the antigen binds to the B-cell receptor, the secreted form sIgD is shut off. IgD is a potent inducer of TNF, IL1B, and IL1RN. IgD also induces release of IL6, IL10, and LIF from peripheral blood mononuclear cells. Monocytes seem to be the main producers of cytokines in vitro in the presence of IgD. This Homo sapiens (Human) protein is Immunoglobulin heavy constant delta.